The sequence spans 336 residues: USG-1 protein homolog (336 aa).

The protein belongs to the aspartate-semialdehyde dehydrogenase family.

This chain is USG-1 protein homolog (usg), found in Pseudomonas aeruginosa (strain ATCC 15692 / DSM 22644 / CIP 104116 / JCM 14847 / LMG 12228 / 1C / PRS 101 / PAO1).